Here is a 182-residue protein sequence, read N- to C-terminus: UPF0397 protein BCAH820_2657 (182 aa).

5 helical membrane-spanning segments follow: residues 9–29 (VVAIGIGSALYGILGLWGFTI), 40–60 (AILTVFGALFGPVAGLLIGLI), 71–91 (WGIWWGWVISSGIIGFTMGFI), 114–134 (ITGLIGIVIAIIFAGAFDIIV), and 142–162 (IVIQVLGATIADVIVFLVLGL).

This sequence belongs to the UPF0397 family.

Its subcellular location is the cell membrane. The protein is UPF0397 protein BCAH820_2657 of Bacillus cereus (strain AH820).